We begin with the raw amino-acid sequence, 1239 residues long: Anillin (1239 aa).

4 disordered regions span residues 32–67 (CSVPSSSATSASGGDAGVLAPRSRSPGGQSAASGGG), 230–265 (EAPPPKPHLSSRRAEKGPAPLPPKKDEVDEASRTKQ), 493–621 (FDNQ…MCNG), and 684–716 (GSTQDDQSDSGDEQNASRLSLGSKGTTASNSFS). Residues 53–63 (RSRSPGGQSAA) show a composition bias toward low complexity. Residues 126 to 371 (EQAEGGALNP…ENKGTGGQSQ (246 aa)) form an interaction with and bundling of F-actin region. A compositionally biased stretch (basic and acidic residues) spans 252 to 265 (PKKDEVDEASRTKQ). Low complexity predominate over residues 500-518 (SSVAAQARPPAPAPSRVVR). Residues 519 to 528 (PMPPPPPPPI) are compositionally biased toward pro residues. Basic and acidic residues predominate over residues 551–563 (EDSKRARKSHSDR). A compositionally biased stretch (acidic residues) spans 594–610 (DEEETESCMDESDDQSQ). The span at 699–716 (ASRLSLGSKGTTASNSFS) shows a compositional bias: polar residues. Ser-712 carries the post-translational modification Phosphoserine. The residue at position 740 (Thr-740) is a Phosphothreonine. Phosphoserine is present on residues Ser-744 and Ser-754. Thr-831 is subject to Phosphothreonine. Residues 834–861 (DDEEMQNAREVNDASQAQDKIKKLLSEV) adopt a coiled-coil conformation. A PH domain is found at 1106–1230 (SVEYKGFLTM…WCAYLNKALT (125 aa)).

In terms of assembly, interacts with and bundles F-actin. In terms of tissue distribution, accumulates in the ring canals that interconnect cells of the germline cysts in males and the ovarian follicles in females. These structures develop from arrested contractile rings after a specialized cytokinesis in which the closing of the invaginating plasma membrane is incomplete. Also concentrates in the arrested cleavage furrows that initially link the oocyte to its 15 nurse cells in the early egg chamber and is subsequently lost from these furrows as germline cell division is completed.

It localises to the nucleus. Its subcellular location is the cytoplasm. The protein resides in the cytoskeleton. The protein localises to the cell cortex. It is found in the cell projection. It localises to the cilium. Its subcellular location is the flagellum. Functionally, required for cytokinesis. Essential for the structural integrity of the cleavage furrow and for completion of cleavage furrow ingression and proper formation of the midbody. Required during cellularization of syncytial embryos for the proper formation and function of the furrow canals, the stable inward folds of the plasma membrane which separate the peripheral nuclei. Also required for the formation of the pole cells, the progenitors of the adult germline which are formed by cytokinesis of the cytoplasmic buds at the posterior pole of the syncytial embryo. Essential for embryonic viability. This Drosophila melanogaster (Fruit fly) protein is Anillin (scra).